The chain runs to 383 residues: Acetylornithine deacetylase (383 aa).

His-80 provides a ligand contact to Zn(2+). Asp-82 is a catalytic residue. Residue Asp-112 coordinates Zn(2+). The active site involves Glu-144. Residues Glu-145, Glu-169, and His-355 each contribute to the Zn(2+) site.

This sequence belongs to the peptidase M20A family. ArgE subfamily. Homodimer. It depends on Zn(2+) as a cofactor. Requires Co(2+) as cofactor. Glutathione serves as cofactor.

It localises to the cytoplasm. It catalyses the reaction N(2)-acetyl-L-ornithine + H2O = L-ornithine + acetate. It participates in amino-acid biosynthesis; L-arginine biosynthesis; L-ornithine from N(2)-acetyl-L-ornithine (linear): step 1/1. In terms of biological role, catalyzes the hydrolysis of the amide bond of N(2)-acetylated L-amino acids. Cleaves the acetyl group from N-acetyl-L-ornithine to form L-ornithine, an intermediate in L-arginine biosynthesis pathway, and a branchpoint in the synthesis of polyamines. This is Acetylornithine deacetylase from Shigella flexneri serotype 5b (strain 8401).